The sequence spans 225 residues: Heptaprenylglyceryl phosphate synthase (225 aa).

Lysine 6 provides a ligand contact to sn-glycerol 1-phosphate. Mg(2+) is bound by residues aspartate 8 and threonine 34. Residues 153 to 158 (YVEYSG), glycine 183, and 203 to 204 (GN) each bind sn-glycerol 1-phosphate.

Belongs to the GGGP/HepGP synthase family. Group I subfamily. As to quaternary structure, homodimer. Mg(2+) serves as cofactor.

The enzyme catalyses sn-glycerol 1-phosphate + all-trans-heptaprenyl diphosphate = 3-heptaprenyl-sn-glycero-1-phosphate + diphosphate. Its pathway is membrane lipid metabolism; glycerophospholipid metabolism. Functionally, prenyltransferase that catalyzes in vivo the transfer of the heptaprenyl moiety of heptaprenyl pyrophosphate (HepPP; 35 carbon atoms) to the C3 hydroxyl of sn-glycerol-1-phosphate (G1P), producing heptaprenylglyceryl phosphate (HepGP). This reaction is an ether-bond-formation step in the biosynthesis of archaea-type G1P-based membrane lipids found in Bacillales. The chain is Heptaprenylglyceryl phosphate synthase from Listeria monocytogenes serotype 4a (strain HCC23).